The chain runs to 230 residues: Small ribosomal subunit protein uS3c (230 aa).

The KH type-2 domain maps to 39 to 109 (IRSFIHSKLS…QLRVNVVEIA (71 aa)).

It belongs to the universal ribosomal protein uS3 family. As to quaternary structure, part of the 30S ribosomal subunit.

It is found in the plastid. The protein resides in the chloroplast. In Pyropia yezoensis (Susabi-nori), this protein is Small ribosomal subunit protein uS3c (rps3).